A 212-amino-acid polypeptide reads, in one-letter code: Outer-membrane lipoprotein carrier protein (212 aa).

An N-terminal signal peptide occupies residues 1 to 25; the sequence is MRKRILVSACAALAVFAAHMPTALA.

This sequence belongs to the LolA family. In terms of assembly, monomer.

The protein resides in the periplasm. Its function is as follows. Participates in the translocation of lipoproteins from the inner membrane to the outer membrane. Only forms a complex with a lipoprotein if the residue after the N-terminal Cys is not an aspartate (The Asp acts as a targeting signal to indicate that the lipoprotein should stay in the inner membrane). This chain is Outer-membrane lipoprotein carrier protein, found in Cupriavidus pinatubonensis (strain JMP 134 / LMG 1197) (Cupriavidus necator (strain JMP 134)).